The sequence spans 462 residues: Centrosomal protein of 55 kDa (462 aa).

Basic and acidic residues predominate over residues 1–11 (MSSRSPKDLIK). The interval 1–25 (MSSRSPKDLIKSKWGSRPSSSKSDT) is disordered. Residues 12–23 (SKWGSRPSSSKS) are compositionally biased toward low complexity. 2 coiled-coil regions span residues 50–185 (KVAN…QQWL) and 228–400 (YLQE…KQLH). Residues Ser96 and Ser99 each carry the phosphoserine modification. The tract at residues 157 to 235 (ANCFNSSMNS…EGYLQEEKQK (79 aa)) is interaction with TSG101. An interaction with PDCD6IP region spans residues 160 to 214 (FNSSMNSIHEKEMQLKDALEKNQQWLVYDQQREAYVKGLLAKIFELEKRTETAAA). The tract at residues 354–462 (QMQACTLDFE…LLVHVEYCMK (109 aa)) is required for localization to the interphase centrosome and to the midbody during cytokinesis. Phosphoserine is present on residues Ser423 and Ser426. Phosphothreonine is present on Thr428. Ser434 carries the post-translational modification Phosphoserine; by PLK1.

In terms of assembly, homodimer. Interacts (phosphorylated on Ser-423 and Ser-426) with PLK1; the interaction is indirect via the MTMR3:MTMR4 heterooligomer, occurs during early mitosis, regulates the phosphorylation of CEP55 by PLK1 and its recruitment to the midbody where it can mediate cell abscission. Interacts with AKAP9/CG-NAP; the interaction occurs in interphase and is lost upon mitotic entry. Interacts with PCNT/Kendrin; the interaction occurs in interphase and is lost upon mitotic entry. Directly interacts with PDCD6IP; this interaction is required for PDCD6IP targeting to the midbody; CEP55 binds PDCD6IP in a 2:1 stoichiometry; PDCD6IP competes with TSG101 for the same binding site. Interacts with TSG101; TSG101 competes with PDCD6IP for the same binding site; interaction is required for cytokinesis. Interacts with MVB12A, VPS37B, VPS37C and VPS28. In terms of processing, there is a hierachy of phosphorylation, where both Ser-423 and Ser-426 are phosphorylated at the onset of mitosis, prior to Ser-434. Phosphorylation at Ser-423 and Ser-426 is required for dissociation from the centrosome at the G2/M boundary. Phosphorylation at the 3 sites, Ser-423, Ser-426 and Ser-434, is required for protein function at the final stages of cell division to complete cytokinesis successfully.

Its subcellular location is the cytoplasm. The protein resides in the cytoskeleton. It is found in the microtubule organizing center. It localises to the centrosome. The protein localises to the centriole. Its subcellular location is the cleavage furrow. The protein resides in the midbody. It is found in the midbody ring. Functionally, plays a role in mitotic exit and cytokinesis. Recruits PDCD6IP and TSG101 to midbody during cytokinesis. Required for successful completion of cytokinesis. Not required for microtubule nucleation. Plays a role in the development of the brain and kidney. The sequence is that of Centrosomal protein of 55 kDa from Rattus norvegicus (Rat).